Consider the following 114-residue polypeptide: uncharacterized protein (114 aa).

Residues 1-20 (MGLSRWHDKNSRPAEEKSEE) are compositionally biased toward basic and acidic residues. The tract at residues 1 to 22 (MGLSRWHDKNSRPAEEKSEEMQ) is disordered.

May be involved in phosphatase regulation and/or generation of precursor metabolites and energy. This is an uncharacterized protein from Saccharomyces cerevisiae (strain ATCC 204508 / S288c) (Baker's yeast).